Consider the following 220-residue polypeptide: NADH-quinone oxidoreductase subunit B (220 aa).

Positions 37, 38, 103, and 132 each coordinate [4Fe-4S] cluster. A disordered region spans residues 174–220 (PSSERYAPKNRSQRKLAERQQAAQRREMGAEKPLGALEERAELNAGR). The span at 210 to 220 (LEERAELNAGR) shows a compositional bias: basic and acidic residues.

Belongs to the complex I 20 kDa subunit family. NDH-1 is composed of 14 different subunits. Subunits NuoB, C, D, E, F, and G constitute the peripheral sector of the complex. [4Fe-4S] cluster is required as a cofactor.

The protein resides in the cell membrane. It carries out the reaction a quinone + NADH + 5 H(+)(in) = a quinol + NAD(+) + 4 H(+)(out). Its function is as follows. NDH-1 shuttles electrons from NADH, via FMN and iron-sulfur (Fe-S) centers, to quinones in the respiratory chain. The immediate electron acceptor for the enzyme in this species is believed to be a menaquinone. Couples the redox reaction to proton translocation (for every two electrons transferred, four hydrogen ions are translocated across the cytoplasmic membrane), and thus conserves the redox energy in a proton gradient. In Saccharopolyspora erythraea (strain ATCC 11635 / DSM 40517 / JCM 4748 / NBRC 13426 / NCIMB 8594 / NRRL 2338), this protein is NADH-quinone oxidoreductase subunit B.